The following is a 111-amino-acid chain: UPF0339 protein in ptx operon 5'region (111 aa).

Tandem repeats lie at residues aspartate 10–arginine 58 and serine 61–valine 109.

This sequence belongs to the UPF0339 family. Duplicated subfamily.

In Stutzerimonas stutzeri (Pseudomonas stutzeri), this protein is UPF0339 protein in ptx operon 5'region.